Reading from the N-terminus, the 369-residue chain is tRNA 2-selenouridine synthase (369 aa).

The 125-residue stretch at 12–136 (FLDDIPLMDV…LRNFLFETTR (125 aa)) folds into the Rhodanese domain. Cys-95 functions as the S-selanylcysteine intermediate in the catalytic mechanism.

Belongs to the SelU family. In terms of assembly, monomer.

The enzyme catalyses 5-methylaminomethyl-2-thiouridine(34) in tRNA + selenophosphate + (2E)-geranyl diphosphate + H2O + H(+) = 5-methylaminomethyl-2-selenouridine(34) in tRNA + (2E)-thiogeraniol + phosphate + diphosphate. It catalyses the reaction 5-methylaminomethyl-2-thiouridine(34) in tRNA + (2E)-geranyl diphosphate = 5-methylaminomethyl-S-(2E)-geranyl-thiouridine(34) in tRNA + diphosphate. The catalysed reaction is 5-methylaminomethyl-S-(2E)-geranyl-thiouridine(34) in tRNA + selenophosphate + H(+) = 5-methylaminomethyl-2-(Se-phospho)selenouridine(34) in tRNA + (2E)-thiogeraniol. It carries out the reaction 5-methylaminomethyl-2-(Se-phospho)selenouridine(34) in tRNA + H2O = 5-methylaminomethyl-2-selenouridine(34) in tRNA + phosphate. Involved in the post-transcriptional modification of the uridine at the wobble position (U34) of tRNA(Lys), tRNA(Glu) and tRNA(Gln). Catalyzes the conversion of 2-thiouridine (S2U-RNA) to 2-selenouridine (Se2U-RNA). Acts in a two-step process involving geranylation of 2-thiouridine (S2U) to S-geranyl-2-thiouridine (geS2U) and subsequent selenation of the latter derivative to 2-selenouridine (Se2U) in the tRNA chain. The sequence is that of tRNA 2-selenouridine synthase from Pseudomonas aeruginosa (strain ATCC 15692 / DSM 22644 / CIP 104116 / JCM 14847 / LMG 12228 / 1C / PRS 101 / PAO1).